The chain runs to 572 residues: Proline--tRNA ligase (572 aa).

This sequence belongs to the class-II aminoacyl-tRNA synthetase family. ProS type 1 subfamily. Homodimer.

The protein localises to the cytoplasm. It carries out the reaction tRNA(Pro) + L-proline + ATP = L-prolyl-tRNA(Pro) + AMP + diphosphate. Catalyzes the attachment of proline to tRNA(Pro) in a two-step reaction: proline is first activated by ATP to form Pro-AMP and then transferred to the acceptor end of tRNA(Pro). As ProRS can inadvertently accommodate and process non-cognate amino acids such as alanine and cysteine, to avoid such errors it has two additional distinct editing activities against alanine. One activity is designated as 'pretransfer' editing and involves the tRNA(Pro)-independent hydrolysis of activated Ala-AMP. The other activity is designated 'posttransfer' editing and involves deacylation of mischarged Ala-tRNA(Pro). The misacylated Cys-tRNA(Pro) is not edited by ProRS. The protein is Proline--tRNA ligase of Yersinia pestis bv. Antiqua (strain Antiqua).